The chain runs to 198 residues: Large ribosomal subunit protein bL25 (198 aa).

It belongs to the bacterial ribosomal protein bL25 family. CTC subfamily. As to quaternary structure, part of the 50S ribosomal subunit; part of the 5S rRNA/L5/L18/L25 subcomplex. Contacts the 5S rRNA. Binds to the 5S rRNA independently of L5 and L18.

Functionally, this is one of the proteins that binds to the 5S RNA in the ribosome where it forms part of the central protuberance. The polypeptide is Large ribosomal subunit protein bL25 (Azotobacter vinelandii (strain DJ / ATCC BAA-1303)).